The primary structure comprises 129 residues: uncharacterized protein (129 aa).

Residues 34–57 are disordered; the sequence is SAPLRPPRELHAAPPPATPTQTVV.

This is an uncharacterized protein from Homo sapiens (Human).